The primary structure comprises 353 residues: Protein RecA (353 aa).

67-74 (GPESSGKT) is an ATP binding site. A disordered region spans residues 330 to 353 (SNPNSTPDFSVDDSEGVAETNEDF). Positions 339–353 (SVDDSEGVAETNEDF) are enriched in acidic residues.

The protein belongs to the RecA family.

The protein localises to the cytoplasm. Can catalyze the hydrolysis of ATP in the presence of single-stranded DNA, the ATP-dependent uptake of single-stranded DNA by duplex DNA, and the ATP-dependent hybridization of homologous single-stranded DNAs. It interacts with LexA causing its activation and leading to its autocatalytic cleavage. The chain is Protein RecA from Shigella sonnei.